We begin with the raw amino-acid sequence, 546 residues long: Probable protein kinase UbiB (546 aa).

The Protein kinase domain occupies 123 to 501 (DFQEIPLASA…RTNHGQALFL (379 aa)). ATP contacts are provided by residues 129–137 (LASASISQV) and K152. Catalysis depends on D287, which acts as the Proton acceptor. A run of 2 helical transmembrane segments spans residues 497-517 (QALF…FLYI) and 521-541 (YLKI…TIGW).

The protein belongs to the ABC1 family. UbiB subfamily.

Its subcellular location is the cell inner membrane. The protein operates within cofactor biosynthesis; ubiquinone biosynthesis [regulation]. Functionally, is probably a protein kinase regulator of UbiI activity which is involved in aerobic coenzyme Q (ubiquinone) biosynthesis. The polypeptide is Probable protein kinase UbiB (Blochmanniella pennsylvanica (strain BPEN)).